The primary structure comprises 343 residues: Holliday junction branch migration complex subunit RuvB (343 aa).

The large ATPase domain (RuvB-L) stretch occupies residues 4–184 (SDRLISAKAG…FGIVQRLEFY (181 aa)). Residues I23, R24, G65, K68, T69, T70, 131–133 (EDY), R174, Y184, and R221 each bind ATP. T69 serves as a coordination point for Mg(2+). Positions 185–255 (NHQDLTHIIT…IADQALNMLK (71 aa)) are small ATPAse domain (RuvB-S). Residues 258-343 (SQGFDHMDRR…RSGREDDLFE (86 aa)) form a head domain (RuvB-H) region. DNA is bound by residues R294, R313, and R318.

Belongs to the RuvB family. Homohexamer. Forms an RuvA(8)-RuvB(12)-Holliday junction (HJ) complex. HJ DNA is sandwiched between 2 RuvA tetramers; dsDNA enters through RuvA and exits via RuvB. An RuvB hexamer assembles on each DNA strand where it exits the tetramer. Each RuvB hexamer is contacted by two RuvA subunits (via domain III) on 2 adjacent RuvB subunits; this complex drives branch migration. In the full resolvosome a probable DNA-RuvA(4)-RuvB(12)-RuvC(2) complex forms which resolves the HJ.

It is found in the cytoplasm. It catalyses the reaction ATP + H2O = ADP + phosphate + H(+). Its function is as follows. The RuvA-RuvB-RuvC complex processes Holliday junction (HJ) DNA during genetic recombination and DNA repair, while the RuvA-RuvB complex plays an important role in the rescue of blocked DNA replication forks via replication fork reversal (RFR). RuvA specifically binds to HJ cruciform DNA, conferring on it an open structure. The RuvB hexamer acts as an ATP-dependent pump, pulling dsDNA into and through the RuvAB complex. RuvB forms 2 homohexamers on either side of HJ DNA bound by 1 or 2 RuvA tetramers; 4 subunits per hexamer contact DNA at a time. Coordinated motions by a converter formed by DNA-disengaged RuvB subunits stimulates ATP hydrolysis and nucleotide exchange. Immobilization of the converter enables RuvB to convert the ATP-contained energy into a lever motion, pulling 2 nucleotides of DNA out of the RuvA tetramer per ATP hydrolyzed, thus driving DNA branch migration. The RuvB motors rotate together with the DNA substrate, which together with the progressing nucleotide cycle form the mechanistic basis for DNA recombination by continuous HJ branch migration. Branch migration allows RuvC to scan DNA until it finds its consensus sequence, where it cleaves and resolves cruciform DNA. The polypeptide is Holliday junction branch migration complex subunit RuvB (Marinobacter nauticus (strain ATCC 700491 / DSM 11845 / VT8) (Marinobacter aquaeolei)).